We begin with the raw amino-acid sequence, 335 residues long: Heat-inducible transcription repressor HrcA (335 aa).

This sequence belongs to the HrcA family.

In terms of biological role, negative regulator of class I heat shock genes (grpE-dnaK-dnaJ and groELS operons). Prevents heat-shock induction of these operons. The polypeptide is Heat-inducible transcription repressor HrcA (Mesomycoplasma hyopneumoniae (strain 232) (Mycoplasma hyopneumoniae)).